Consider the following 151-residue polypeptide: Superoxide dismutase [Cu-Zn] (151 aa).

Cys-6 is lipidated: S-palmitoyl cysteine. Cu cation is bound by residues His-45, His-47, and His-62. The cysteines at positions 56 and 144 are disulfide-linked. Residues His-62, His-70, His-79, and Asp-82 each coordinate Zn(2+). His-118 is a binding site for Cu cation.

The protein belongs to the Cu-Zn superoxide dismutase family. In terms of assembly, homodimer. The cofactor is Cu cation. Zn(2+) serves as cofactor.

It is found in the cytoplasm. The protein resides in the nucleus. It carries out the reaction 2 superoxide + 2 H(+) = H2O2 + O2. Destroys radicals which are normally produced within the cells and which are toxic to biological systems. This is Superoxide dismutase [Cu-Zn] (sod1) from Xenopus tropicalis (Western clawed frog).